Here is a 575-residue protein sequence, read N- to C-terminus: Glutathione hydrolase proenzyme (575 aa).

Positions 1-24 are cleaved as a signal peptide; sequence MKNQTFSKALLATALSCALFNVHA. Arg100 is a binding site for L-glutamate. The active-site Nucleophile is the Thr376. Residues Thr394, Asn396, Glu415, Asp418, 447 to 448, and 468 to 469 contribute to the L-glutamate site; these read SS and GG.

Belongs to the gamma-glutamyltransferase family. This enzyme consists of two polypeptide chains, which are synthesized in precursor form from a single polypeptide. Cleaved by autocatalysis into a large and a small subunit.

It localises to the periplasm. The enzyme catalyses an N-terminal (5-L-glutamyl)-[peptide] + an alpha-amino acid = 5-L-glutamyl amino acid + an N-terminal L-alpha-aminoacyl-[peptide]. It catalyses the reaction glutathione + H2O = L-cysteinylglycine + L-glutamate. The catalysed reaction is an S-substituted glutathione + H2O = an S-substituted L-cysteinylglycine + L-glutamate. It participates in sulfur metabolism; glutathione metabolism. This is Glutathione hydrolase proenzyme (ggt) from Pseudomonas sp. (strain A14).